The primary structure comprises 157 residues: Cell cycle regulator of non-homologous end joining (157 aa).

Position 1 is an N-acetylmethionine (methionine 1). Positions 1–21 match the KBM motif; that stretch reads METLQSETKTRVLPSWLTAQV. The interval 77–147 is disordered; the sequence is KACEQPALAG…SPEEEEEEDV (71 aa). Residues 98 to 107 are compositionally biased toward low complexity; the sequence is VSPHTSSGSS. Positions 123–136 are enriched in polar residues; that stretch reads SPSQRPGGSSSACS. Positions 147–157 match the XLM motif; sequence VLKYVREIFFS.

As to quaternary structure, interacts (via KBM motif) with XRCC5/Ku80 and XRCC6/Ku70 heterodimer. Interacts (via XLF motif) with TRIM28/KAP1, ATM, MRE11, NBN and RAD50. Interacts with splicing factor SF3B1. Interacts with ERCC6L2; this interaction is DNA independent. In terms of assembly, does not interact with XRCC5/Ku80 and XRCC6/Ku70 heterodimer. Interacts (via KBM motif) with XRCC5/Ku80 and XRCC6/Ku70 heterodimer.

The protein localises to the cytoplasm. The protein resides in the nucleus. It localises to the chromosome. Its function is as follows. Cell-cycle-specific regulator of classical non-homologous end joining (NHEJ) of DNA double-strand break (DSB) repair, which can act both as an activator or inhibitor of NHEJ, depending on the cell cycle phase. Acts as a regulator of DNA repair pathway choice by specifically inhibiting classical NHEJ during the S and G2 phases, thereby promoting error-free repair by homologous recombination during cell cycle phases when sister chromatids are present. Preferentially protects single-stranded overhangs at break sites by inhibiting classical NHEJ, thereby creating a local environment that favors homologous recombination. Acts via interaction with XRCC5/Ku80 and XRCC6/Ku70. In contrast, acts as an activator of NHEJ during G1 phase of the cell cycle: promotes classical NHEJ in G1 phase cells via multivalent interactions that increase the affinity of DNA damage response proteins for DSB-associated chromatin. Also involved in immunoglobulin V(D)J recombination. May also act as an indirect regulator of proteasome. The polypeptide is Cell cycle regulator of non-homologous end joining (Homo sapiens (Human)).